Here is a 149-residue protein sequence, read N- to C-terminus: Arginine repressor (149 aa).

Belongs to the ArgR family.

The protein resides in the cytoplasm. The protein operates within amino-acid biosynthesis; L-arginine biosynthesis [regulation]. Functionally, regulates arginine biosynthesis genes. The chain is Arginine repressor from Chlorobaculum tepidum (strain ATCC 49652 / DSM 12025 / NBRC 103806 / TLS) (Chlorobium tepidum).